The following is a 294-amino-acid chain: Urease accessory protein UreD 1 (294 aa).

Residues 1–22 (MALSLDGLPEKPAPAEAPSPPV) form a disordered region. The span at 11–21 (KPAPAEAPSPP) shows a compositional bias: pro residues.

It belongs to the UreD family. UreD, UreF and UreG form a complex that acts as a GTP-hydrolysis-dependent molecular chaperone, activating the urease apoprotein by helping to assemble the nickel containing metallocenter of UreC. The UreE protein probably delivers the nickel.

The protein resides in the cytoplasm. In terms of biological role, required for maturation of urease via the functional incorporation of the urease nickel metallocenter. This chain is Urease accessory protein UreD 1, found in Methylorubrum extorquens (strain PA1) (Methylobacterium extorquens).